A 227-amino-acid chain; its full sequence is Probable proteasome subunit beta type-2 (227 aa).

The propeptide at 1-6 (MITKTG) is removed in mature form. Residue T7 is the Nucleophile of the active site.

The protein belongs to the peptidase T1B family. The 26S proteasome consists of a 20S proteasome core and two 19S regulatory subunits. The 20S proteasome core is composed of 28 subunits that are arranged in four stacked rings, resulting in a barrel-shaped structure. The two end rings are each formed by seven alpha subunits, and the two central rings are each formed by seven beta subunits. The catalytic chamber with the active sites is on the inside of the barrel.

It is found in the cytoplasm. The protein localises to the nucleus. The enzyme catalyses Cleavage of peptide bonds with very broad specificity.. The proteasome degrades poly-ubiquitinated proteins in the cytoplasm and in the nucleus. It is essential for the regulated turnover of proteins and for the removal of misfolded proteins. The proteasome is a multicatalytic proteinase complex that is characterized by its ability to cleave peptides with Arg, Phe, Tyr, Leu, and Glu adjacent to the leaving group at neutral or slightly basic pH. It has an ATP-dependent proteolytic activity. The sequence is that of Probable proteasome subunit beta type-2 (PUP1) from Encephalitozoon cuniculi (strain GB-M1) (Microsporidian parasite).